Here is a 963-residue protein sequence, read N- to C-terminus: MRGLPGHERRWTSDTVSSGKDLSGESSPGTDSGNISGFASEEFVEVILDLQDDDTIILRSVEPATVINIDASDPATGVGIGGVSIETPASLTSTSGTRSPTMRRSTSNKLRQFSQELKAEAVAKAKHFSQELKAELRRFSWSHGHASRTFSPASFFQNAVVGTGNGVDSALAARALRRQRAQLDRTRSSAHKALRGLKFISNNKTNGWNEVENNFAKLAKDGYLYRSDFAQCIGMKDSKEFALELFDALSRRRRLKVDKISKEELYEYWSQITDQSFDSRLQIFFDMVDKNEDGRIGEEEVKEIIMLSASANKLSRLKEQAEEYAALIMEELDPERLGYIELWQLETLLLQKDTYLNYSQALSYTSQALSQNLQGLRKRSPIRRMSTKLVYSLQENWKRIWVLVLWILIMIGLFLWKFYLYKQKSAFQVMGYCLLTAKGAAETLKFNMALILLPVCRNTITFLRSTKLSCFVPFDDNINFHKTVAAAIVTGIILHAGNHLVCDFPKLIHANNTNYQKYLVNDFGPSQPQYIDLVKGVEGVTGIIMVILMAIAFTLATRWFRRSLIKFPKPFDRLTGFNAFWYSHHLLIIVYIVLIIHGTFLYLVHNWYSKTTWMYLAVPVLLYAGERTLRFFRSGLYTVRLLKVAIYPGNVLTLQMSKPPQFRYKSGQYMFVQCPAVSPFEWHPFSITSAPGDDYLSIHIRQLGDWTQELKRVFSEACEQPEAGKSGLLRADENTKTSLPKLLIDGPYGAPAQDYRKYDVLLLVGLGIGATPFISILKDLLKNIVTMEEQADLVSDFSGNSDMSAATSEQPALNKISPKKRKSTLKTTNAYFYWVTREQGSFDWFKGVMNEVAELDQRGVIEMHNYLTSVYEEGDARSALITMVQALNHAKNGVDIVSGTSVRTHFARPNWRKVFSKTLTKHANARIGVFYCGAPILAKELSKLCKEFNQKGTTKFEFHKEHF.

Residues 1-12 (MRGLPGHERRWT) show a composition bias toward basic and acidic residues. Positions 1-36 (MRGLPGHERRWTSDTVSSGKDLSGESSPGTDSGNIS) are disordered. Residues 1 to 399 (MRGLPGHERR…VYSLQENWKR (399 aa)) lie on the Cytoplasmic side of the membrane. A compositionally biased stretch (polar residues) spans 13 to 36 (SDTVSSGKDLSGESSPGTDSGNIS). 2 EF-hand-like regions span residues 219–227 (AKDGYLYRS) and 253–264 (RRLKVDKISKEE). An EF-hand domain is found at 276–311 (SFDSRLQIFFDMVDKNEDGRIGEEEVKEIIMLSASA). Ca(2+) is bound by residues aspartate 289, asparagine 291, aspartate 293, arginine 295, and glutamate 300. A helical transmembrane segment spans residues 400–420 (IWVLVLWILIMIGLFLWKFYL). Residues 421–435 (YKQKSAFQVMGYCLL) lie on the Extracellular side of the membrane. Residues 436–456 (TAKGAAETLKFNMALILLPVC) form a helical membrane-spanning segment. A Ferric oxidoreductase domain is found at 438 to 595 (KGAAETLKFN…LLIIVYIVLI (158 aa)). Over 457-482 (RNTITFLRSTKLSCFVPFDDNINFHK) the chain is Cytoplasmic. Residues 483–503 (TVAAAIVTGIILHAGNHLVCD) form a helical membrane-spanning segment. The Extracellular segment spans residues 504–535 (FPKLIHANNTNYQKYLVNDFGPSQPQYIDLVK). The chain crosses the membrane as a helical span at residues 536–556 (GVEGVTGIIMVILMAIAFTLA). Residues 557 to 583 (TRWFRRSLIKFPKPFDRLTGFNAFWYS) are Cytoplasmic-facing. Residues 584–604 (HHLLIIVYIVLIIHGTFLYLV) traverse the membrane as a helical segment. At 605-759 (HNWYSKTTWM…APAQDYRKYD (155 aa)) the chain is on the extracellular side. One can recognise an FAD-binding FR-type domain in the interval 634 to 754 (SGLYTVRLLK…DGPYGAPAQD (121 aa)). Residues 760–780 (VLLLVGLGIGATPFISILKDL) form a helical membrane-spanning segment. At 781–963 (LKNIVTMEEQ…TKFEFHKEHF (183 aa)) the chain is on the cytoplasmic side.

It belongs to the RBOH (TC 5.B.1.3) family. Monomer and homodimer. Phosphorylated by CPK.

The protein localises to the cell membrane. Calcium-dependent NADPH oxidase that generates superoxide. Involved in the rapid and transient phase I oxidative burst induced by pathogen infection. The sequence is that of Respiratory burst oxidase homolog protein A (RBOHA) from Solanum tuberosum (Potato).